The chain runs to 300 residues: MVNNSQHPYIKDGWFREINDKSFPGQAFTMTVDSILYEARSEFQDILIFRNKVYGTVLVLDGIVQCTEFDEFAYQEMITHIAMFAHSNPKRVLIIGGGDGGVLREVAKHSCVEDITMVEIDSSVIELSRKFLPTLSNGAFDDERLDLKLCDGFKFLQDIGASDVHKKFDVIITDSSDPEGPAEAFFQERYFELLKDALNPNGVVIMQSSENFWLNLKYLHDLKNTAKKVFPNTEYCYTMVPTYTSGQLGLIVCSNNANIPLNIPQRKISEQEQGKLKYYNPQIHSSAFVLPTWADKVINE.

Ser5 carries the post-translational modification Phosphoserine. Residues 12-255 (DGWFREINDK…GQLGLIVCSN (244 aa)) form the PABS domain. S-adenosyl 3-(methylsulfanyl)propylamine is bound by residues Gln44, Asp99, Glu119, and 151–152 (DG). Asp174 acts as the Proton acceptor in catalysis. Asp177 serves as a coordination point for spermidine.

This sequence belongs to the spermidine/spermine synthase family.

The catalysed reaction is S-adenosyl 3-(methylsulfanyl)propylamine + spermidine = spermine + S-methyl-5'-thioadenosine + H(+). The protein operates within amine and polyamine biosynthesis; spermine biosynthesis; spermine from spermidine: step 1/1. This Saccharomyces cerevisiae (strain ATCC 204508 / S288c) (Baker's yeast) protein is Spermine synthase SPE4 (SPE4).